Reading from the N-terminus, the 373-residue chain is 4-hydroxy-3-methylbut-2-en-1-yl diphosphate synthase (flavodoxin) (373 aa).

Residues Cys-270, Cys-273, Cys-305, and Glu-312 each coordinate [4Fe-4S] cluster.

Belongs to the IspG family. [4Fe-4S] cluster is required as a cofactor.

It catalyses the reaction (2E)-4-hydroxy-3-methylbut-2-enyl diphosphate + oxidized [flavodoxin] + H2O + 2 H(+) = 2-C-methyl-D-erythritol 2,4-cyclic diphosphate + reduced [flavodoxin]. It functions in the pathway isoprenoid biosynthesis; isopentenyl diphosphate biosynthesis via DXP pathway; isopentenyl diphosphate from 1-deoxy-D-xylulose 5-phosphate: step 5/6. Functionally, converts 2C-methyl-D-erythritol 2,4-cyclodiphosphate (ME-2,4cPP) into 1-hydroxy-2-methyl-2-(E)-butenyl 4-diphosphate. This Klebsiella pneumoniae (strain 342) protein is 4-hydroxy-3-methylbut-2-en-1-yl diphosphate synthase (flavodoxin).